The sequence spans 197 residues: Phospholipid hydroperoxide glutathione peroxidase (197 aa).

Position 40 is a phosphoserine (serine 40). The active site involves selenocysteine 73. A non-standard amino acid (selenocysteine) is located at residue selenocysteine 73.

It belongs to the glutathione peroxidase family. As to quaternary structure, monomer. Has a tendency to form higher mass oligomers. Interacts with FUNDC1; this interaction promotes GPX4 recruitment into mitochondria through TOM/TIM complex where it is degraded by mitophagy.

It localises to the mitochondrion. It is found in the cytoplasm. It carries out the reaction a hydroperoxy polyunsaturated fatty acid + 2 glutathione = a hydroxy polyunsaturated fatty acid + glutathione disulfide + H2O. The enzyme catalyses 2 glutathione + H2O2 = glutathione disulfide + 2 H2O. It catalyses the reaction tert-butyl hydroperoxide + 2 glutathione = tert-butanol + glutathione disulfide + H2O. The catalysed reaction is cumene hydroperoxide + 2 glutathione = 2-phenylpropan-2-ol + glutathione disulfide + H2O. It carries out the reaction (9S)-hydroperoxy-(10E,12Z)-octadecadienoate + 2 glutathione = (9S)-hydroxy-(10E,12Z)-octadecadienoate + glutathione disulfide + H2O. The enzyme catalyses (13S)-hydroperoxy-(9Z,11E)-octadecadienoate + 2 glutathione = (13S)-hydroxy-(9Z,11E)-octadecadienoate + glutathione disulfide + H2O. It catalyses the reaction (5S)-hydroperoxy-(6E,8Z,11Z,14Z)-eicosatetraenoate + 2 glutathione = (5S)-hydroxy-(6E,8Z,11Z,14Z)-eicosatetraenoate + glutathione disulfide + H2O. The catalysed reaction is (12R)-hydroperoxy-(5Z,8Z,10E,14Z)-eicosatetraenoate + 2 glutathione = (12R)-hydroxy-(5Z,8Z,10E,14Z)-eicosatetraenoate + glutathione disulfide + H2O. It carries out the reaction (12S)-hydroperoxy-(5Z,8Z,10E,14Z)-eicosatetraenoate + 2 glutathione = (12S)-hydroxy-(5Z,8Z,10E,14Z)-eicosatetraenoate + glutathione disulfide + H2O. The enzyme catalyses (15S)-hydroperoxy-(5Z,8Z,11Z,13E)-eicosatetraenoate + 2 glutathione = (15S)-hydroxy-(5Z,8Z,11Z,13E)-eicosatetraenoate + glutathione disulfide + H2O. It catalyses the reaction (5S)-hydroperoxy-(6E,8Z,11Z,14Z,17Z)-eicosapentaenoate + 2 glutathione = (5S)-hydroxy-(6E,8Z,11Z,14Z,17Z)-eicosapentaenoate + glutathione disulfide + H2O. The catalysed reaction is (12S)-hydroperoxy-(5Z,8Z,10E,14Z,17Z)-eicosapentaenoate + 2 glutathione = (12S)-hydroxy-(5Z,8Z,10E,14Z,17Z)-eicosapentaenoate + glutathione disulfide + H2O. It carries out the reaction (15S)-hydroperoxy-(5Z,8Z,11Z,13E,17Z)-eicosapentaenoate + 2 glutathione = (15S)-hydroxy-(5Z,8Z,11Z,13E,17Z)-eicosapentaenoate + glutathione disulfide + H2O. The enzyme catalyses (15S)-hydroperoxy-(11Z,13E)-eicosadienoate + 2 glutathione = (15S)-hydroxy-(11Z,13E)-eicosadienoate + glutathione disulfide + H2O. It catalyses the reaction (17S)-hydroperoxy-(4Z,7Z,10Z,13Z,15E,19Z)-docosahexaenoate + 2 glutathione = (17S)-hydroxy-(4Z,7Z,10Z,13Z,15E,19Z)-docosahexaenoate + glutathione disulfide + H2O. The catalysed reaction is a hydroperoxy-1,2-diacyl-glycero-3-phosphocholine + 2 glutathione = a hydroxy-1,2-diacyl-glycero-3-phosphocholine + glutathione disulfide + H2O. Functionally, essential antioxidant peroxidase that directly reduces phospholipid hydroperoxide even if they are incorporated in membranes and lipoproteins. Can also reduce fatty acid hydroperoxide, cholesterol hydroperoxide and thymine hydroperoxide. Plays a key role in protecting cells from oxidative damage by preventing membrane lipid peroxidation. Required to prevent cells from ferroptosis, a non-apoptotic cell death resulting from an iron-dependent accumulation of lipid reactive oxygen species. The presence of selenocysteine (Sec) versus Cys at the active site is essential for life: it provides resistance to overoxidation and prevents cells against ferroptosis. The presence of Sec at the active site is also essential for the survival of a specific type of parvalbumin-positive interneurons, thereby preventing against fatal epileptic seizures. May be required to protect cells from the toxicity of ingested lipid hydroperoxides. Required for normal sperm development and male fertility. Essential for maturation and survival of photoreceptor cells. Plays a role in a primary T-cell response to viral and parasitic infection by protecting T-cells from ferroptosis and by supporting T-cell expansion. Plays a role of glutathione peroxidase in platelets in the arachidonic acid metabolism. Reduces hydroperoxy ester lipids formed by a 15-lipoxygenase that may play a role as down-regulator of the cellular 15-lipoxygenase pathway. Can also reduce small soluble hydroperoxides such as H2O2, cumene hydroperoxide and tert-butyl hydroperoxide. The polypeptide is Phospholipid hydroperoxide glutathione peroxidase (Hylobates lar (Lar gibbon)).